The following is a 483-amino-acid chain: Glutamyl-tRNA(Gln) amidotransferase subunit A (483 aa).

Active-site charge relay system residues include K76 and S151. S175 acts as the Acyl-ester intermediate in catalysis.

The protein belongs to the amidase family. GatA subfamily. As to quaternary structure, heterotrimer of A, B and C subunits.

It carries out the reaction L-glutamyl-tRNA(Gln) + L-glutamine + ATP + H2O = L-glutaminyl-tRNA(Gln) + L-glutamate + ADP + phosphate + H(+). In terms of biological role, allows the formation of correctly charged Gln-tRNA(Gln) through the transamidation of misacylated Glu-tRNA(Gln) in organisms which lack glutaminyl-tRNA synthetase. The reaction takes place in the presence of glutamine and ATP through an activated gamma-phospho-Glu-tRNA(Gln). This chain is Glutamyl-tRNA(Gln) amidotransferase subunit A, found in Pseudomonas entomophila (strain L48).